Consider the following 510-residue polypeptide: uncharacterized protein (510 aa).

The signal sequence occupies residues 1–19; that stretch reads MLILLILYFLFLQLHIFDS. A helical transmembrane segment spans residues 28–48; that stretch reads IYIHYAICKFIFLLEIYKLIA.

It is found in the host membrane. This is an uncharacterized protein from Sulfolobus islandicus rod-shaped virus 1 (SIRV-1).